The sequence spans 500 residues: Glycerol kinase (500 aa).

Thr11 is a binding site for ADP. Thr11, Thr12, and Ser13 together coordinate ATP. Thr11 is a binding site for sn-glycerol 3-phosphate. Arg15 is an ADP binding site. Sn-glycerol 3-phosphate is bound by residues Arg81, Glu82, Tyr133, and Asp242. Glycerol is bound by residues Arg81, Glu82, Tyr133, Asp242, and Gln243. The ADP site is built by Thr264 and Gly307. Thr264, Gly307, Gln311, and Gly411 together coordinate ATP. Gly411 is a binding site for ADP.

The protein belongs to the FGGY kinase family.

The catalysed reaction is glycerol + ATP = sn-glycerol 3-phosphate + ADP + H(+). It participates in polyol metabolism; glycerol degradation via glycerol kinase pathway; sn-glycerol 3-phosphate from glycerol: step 1/1. Its activity is regulated as follows. Inhibited by fructose 1,6-bisphosphate (FBP). Key enzyme in the regulation of glycerol uptake and metabolism. Catalyzes the phosphorylation of glycerol to yield sn-glycerol 3-phosphate. This is Glycerol kinase from Bradyrhizobium sp. (strain BTAi1 / ATCC BAA-1182).